Consider the following 89-residue polypeptide: Small ribosomal subunit protein uS15 (89 aa).

It belongs to the universal ribosomal protein uS15 family. Part of the 30S ribosomal subunit. Forms a bridge to the 50S subunit in the 70S ribosome, contacting the 23S rRNA.

Its function is as follows. One of the primary rRNA binding proteins, it binds directly to 16S rRNA where it helps nucleate assembly of the platform of the 30S subunit by binding and bridging several RNA helices of the 16S rRNA. In terms of biological role, forms an intersubunit bridge (bridge B4) with the 23S rRNA of the 50S subunit in the ribosome. This chain is Small ribosomal subunit protein uS15, found in Desulforapulum autotrophicum (strain ATCC 43914 / DSM 3382 / VKM B-1955 / HRM2) (Desulfobacterium autotrophicum).